Consider the following 171-residue polypeptide: CS1 fimbrial subunit A (171 aa).

The first 23 residues, 1–23 (MKLKKTIGAMALATLFATMGASA), serve as a signal peptide directing secretion.

The protein belongs to the fimbrial CS1 protein family.

The protein resides in the fimbrium. Its function is as follows. Fimbriae (also called pili), polar filaments radiating from the surface of the bacterium to a length of 0.5-1.5 micrometers and numbering 100-300 per cell, enable bacteria to colonize the epithelium of specific host organs. The polypeptide is CS1 fimbrial subunit A (csoA) (Escherichia coli).